Consider the following 147-residue polypeptide: Large ribosomal subunit protein uL13 (147 aa).

The protein belongs to the universal ribosomal protein uL13 family. In terms of assembly, part of the 50S ribosomal subunit.

Its function is as follows. This protein is one of the early assembly proteins of the 50S ribosomal subunit, although it is not seen to bind rRNA by itself. It is important during the early stages of 50S assembly. In Streptomyces avermitilis (strain ATCC 31267 / DSM 46492 / JCM 5070 / NBRC 14893 / NCIMB 12804 / NRRL 8165 / MA-4680), this protein is Large ribosomal subunit protein uL13.